Consider the following 205-residue polypeptide: Large ribosomal subunit protein uL4 (205 aa).

The interval 43-97 is disordered; sequence GKRQGTSKVKNRSAVRGGGKKPWRQKGTGRARQGSIRAPQWRGGGTVFGPTPRSY. Residues 51-71 show a composition bias toward basic residues; it reads VKNRSAVRGGGKKPWRQKGTG.

Belongs to the universal ribosomal protein uL4 family. Part of the 50S ribosomal subunit.

In terms of biological role, one of the primary rRNA binding proteins, this protein initially binds near the 5'-end of the 23S rRNA. It is important during the early stages of 50S assembly. It makes multiple contacts with different domains of the 23S rRNA in the assembled 50S subunit and ribosome. Forms part of the polypeptide exit tunnel. The protein is Large ribosomal subunit protein uL4 of Lactobacillus acidophilus (strain ATCC 700396 / NCK56 / N2 / NCFM).